We begin with the raw amino-acid sequence, 181 residues long: Ninjurin-B (181 aa).

Over residues 1–10 (MDSGEVKISL) the composition is skewed to basic and acidic residues. The segment at 1–72 (MDSGEVKISL…SNKKCSSDLS (72 aa)) is disordered. Topologically, residues 1–115 (MDSGEVKISL…YNDKASTYIY (115 aa)) are extracellular. The span at 12 to 26 (DSPSSGESFASTTSG) shows a compositional bias: polar residues. Residues 33–49 (RDLDIQVHESHIKDDQF) show a composition bias toward basic and acidic residues. The interval 80–91 (NKNVAEGLMDIA) is helix alpha1. The segment at 94 to 110 (SANANQLRFLITYNDKA) is helix alpha2. The chain crosses the membrane as a helical span at residues 116–136 (SMIMVILSLVLQLLVGIMLIF). Residues 137-153 (KRRLKRFRNRSYERTND) are Cytoplasmic-facing. A helical membrane pass occupies residues 154–174 (LLVMGVFMITVINILLAAFTT). The Extracellular segment spans residues 175-181 (TDGGGSH).

It belongs to the ninjurin family.

It is found in the membrane. Its function is as follows. Effector of non-apoptotic necrotic cell death that mediates plasma membrane rupture (cytolysis): oligomerizes in response to death stimuli and promotes plasma membrane rupture by introducing hydrophilic faces of 2 alpha helices into the hydrophobic membrane, leading to release intracellular molecules that propagate the inflammatory response. Also acts as a homophilic transmembrane adhesion molecule that promotes cell adhesion by mediating homophilic interactions via its extracellular region. This Drosophila melanogaster (Fruit fly) protein is Ninjurin-B.